The sequence spans 329 residues: Fructose-1,6-bisphosphatase class 1 (329 aa).

E84, D103, L105, and D106 together coordinate Mg(2+). Substrate contacts are provided by residues 106–109 (DGSS), N196, and K262. Mg(2+) is bound at residue E268.

The protein belongs to the FBPase class 1 family. Homotetramer. Mg(2+) serves as cofactor.

The protein resides in the cytoplasm. It catalyses the reaction beta-D-fructose 1,6-bisphosphate + H2O = beta-D-fructose 6-phosphate + phosphate. The protein operates within carbohydrate biosynthesis; gluconeogenesis. This Shewanella woodyi (strain ATCC 51908 / MS32) protein is Fructose-1,6-bisphosphatase class 1.